Reading from the N-terminus, the 362-residue chain is Abnormal cell migration protein 13 (362 aa).

Positions 1 to 20 (MTKLLIALILFSICWKPYSA) are cleaved as a signal peptide. Residues 21–237 (EPIASFFDGL…ELDPLTTVSG (217 aa)) lie on the Extracellular side of the membrane. 2 cysteine pairs are disulfide-bonded: C36-C68 and C98-C136. The CUB domain occupies 36 to 175 (CKARLDRRLT…KGFKLHWGSF (140 aa)). N63 carries N-linked (GlcNAc...) asparagine glycosylation. Residues N145 and N161 are each glycosylated (N-linked (GlcNAc...) asparagine). The LDL-receptor class A domain occupies 182–225 (NCVTGEFSCGNGECIPIESACDRFADCSNGEDLIHSRQMAANCQ). Cystine bridges form between C183–C195, C190–C208, and C202–C224. The chain crosses the membrane as a helical span at residues 238–258 (VFVLLFSATIILSLCGFIMFV). Topologically, residues 259–362 (CCLCKCLKST…VRNDVHRNLL (104 aa)) are cytoplasmic. The interval 275–311 (SSHTTTTTATDYKPDPPQFYPPSPPKMPPPSAASSYT) is disordered. The segment covering 289 to 305 (DPPQFYPPSPPKMPPPS) has biased composition (pro residues).

As to quaternary structure, interacts with abl-1 (via SH2 and SH3 domains); the interaction is direct. Interacts with sem-5; the interaction is direct. Expressed in pharyngeal-intestinal valve cells and ventral cord neurons.

The protein resides in the cell membrane. The protein localises to the perikaryon. It localises to the cell projection. It is found in the axon. Its subcellular location is the dendrite. In terms of biological role, probable receptor that acts as an upstream signaling protein to promote the guidance, migration and positioning of the right Q neuroblast (QR) and its descendants along the anteroposterior body axis, and also the anterior migration of BDU interneurons during larval development. Associates with and recruits the downstream components tyrosine kinase abl-1 and the tyrosine kinase adapter protein sem-5 to the leading edge of migrating Q neuroblasts and their descendants to activate signaling through the two parallel wve-1 and wsp-1 pathways, respectively, and direct migration along the anteroposterior body axis. Involved in cytoskeleton dynamics regulating the organization of the actin cytoskeleton at the leading edge of migrating cells to ensure correct Q cell polarity and promote migration. Role in cytoskeleton organization may be by activation of the wve-1 and wsp-1 pathways which recruit the Arp2/3 complex to the leading edge of migrating cells. Plays a role in regulating the asymmetric distribution of the actin cytoskeleton-binding protein cor-1 in Q neuroblasts which is required for the anterior migration of QR neuroblasts. The polypeptide is Abnormal cell migration protein 13 (Caenorhabditis elegans).